A 627-amino-acid chain; its full sequence is 1-deoxy-D-xylulose-5-phosphate synthase (627 aa).

Thiamine diphosphate-binding positions include H76 and 117–119 (SHA). Residue D148 coordinates Mg(2+). Residues 149–150 (GA), N178, F288, and E370 contribute to the thiamine diphosphate site. N178 is a Mg(2+) binding site.

Belongs to the transketolase family. DXPS subfamily. Homodimer. Mg(2+) is required as a cofactor. The cofactor is thiamine diphosphate.

It catalyses the reaction D-glyceraldehyde 3-phosphate + pyruvate + H(+) = 1-deoxy-D-xylulose 5-phosphate + CO2. Its pathway is metabolic intermediate biosynthesis; 1-deoxy-D-xylulose 5-phosphate biosynthesis; 1-deoxy-D-xylulose 5-phosphate from D-glyceraldehyde 3-phosphate and pyruvate: step 1/1. Functionally, catalyzes the acyloin condensation reaction between C atoms 2 and 3 of pyruvate and glyceraldehyde 3-phosphate to yield 1-deoxy-D-xylulose-5-phosphate (DXP). This is 1-deoxy-D-xylulose-5-phosphate synthase from Cutibacterium acnes (strain DSM 16379 / KPA171202) (Propionibacterium acnes).